The chain runs to 1214 residues: Neuronal cell adhesion molecule (1214 aa).

A signal peptide spans 1–29; sequence MQLKTMPKKKPLSAGRAPLFLFLCQMISA. Topologically, residues 30–1077 are extracellular; the sequence is LDVPLDPKLL…ASRQVDIATQ (1048 aa). 2 consecutive Ig-like C2-type domains span residues 46 to 134 and 141 to 235; these read PTIT…AAVS and PSRS…QPIS. Intrachain disulfides connect C68–C123 and C167–C218. N83 is a glycosylation site (N-linked (GlcNAc...) asparagine). N-linked (GlcNAc...) asparagine glycans are attached at residues N223, N245, N251, N276, N314, and N377. 4 Ig-like C2-type domains span residues 267-356, 361-448, 454-541, and 545-626; these read PPTF…ISVT, PYWI…AFVN, PRIL…VHLE, and PTRF…DSVS. Residues C292 and C340 are joined by a disulfide bond. Cysteines 382 and 432 form a disulfide. N433 and N507 each carry an N-linked (GlcNAc...) asparagine glycan. Disulfide bonds link C476-C525 and C567-C616. Residues N619, N716, N802, N858, N993, N1009, and N1019 are each glycosylated (N-linked (GlcNAc...) asparagine). Fibronectin type-III domains lie at 649-744, 746-843, 848-950, and 954-1051; these read PPFD…TKAA, PDQN…SGED, APGN…TPEG, and APSS…VDEG. A helical transmembrane segment spans residues 1078-1100; the sequence is GWFIGLMCAVALLILILLIVCFI. Over 1101–1214 the chain is Cytoplasmic; the sequence is RRNKGGKYPV…SPVNAMNSFV (114 aa). Over residues 1109–1129 the composition is skewed to basic and acidic residues; sequence PVKEKEDAHADPEIQPMKEDD. Residues 1109-1214 form a disordered region; that stretch reads PVKEKEDAHA…SPVNAMNSFV (106 aa). T1131 carries the phosphothreonine modification. Y1135 carries the post-translational modification Phosphotyrosine. Position 1136 is a phosphoserine (S1136). Basic and acidic residues predominate over residues 1151–1160; that stretch reads PSDRTVKKED. A phosphoserine mark is found at S1161, S1164, S1181, S1200, S1201, and S1205. Residues 1198–1214 are compositionally biased toward polar residues; that stretch reads NESSEAPSPVNAMNSFV.

It belongs to the immunoglobulin superfamily. L1/neurofascin/NgCAM family. In terms of assembly, constituent of a NFASC/NRCAM/ankyrin-G complex. Detected in a complex with CNTN1 and PTPRB. Interacts with MYOC. Interacts with GLDN. As to expression, detected in cerebellum Purkinje cells. Detected on nodes of Ranvier and unmyelinated axons in sciatic nerve (at protein level).

The protein resides in the cell membrane. The protein localises to the cell projection. It is found in the axon. Its subcellular location is the secreted. In terms of biological role, cell adhesion protein that is required for normal responses to cell-cell contacts in brain and in the peripheral nervous system. Plays a role in neurite outgrowth in response to contactin binding. Plays a role in mediating cell-cell contacts between Schwann cells and axons. Plays a role in the formation and maintenance of the nodes of Ranvier on myelinated axons. Nodes of Ranvier contain clustered sodium channels that are crucial for the saltatory propagation of action potentials along myelinated axons. During development, nodes of Ranvier are formed by the fusion of two heminodes. Required for normal clustering of sodium channels at heminodes; not required for the formation of mature nodes with normal sodium channel clusters. Required, together with GLDN, for maintaining NFASC and sodium channel clusters at mature nodes of Ranvier. In Rattus norvegicus (Rat), this protein is Neuronal cell adhesion molecule (Nrcam).